The chain runs to 496 residues: Probable CtpA-like serine protease (496 aa).

Basic and acidic residues predominate over residues 1–16 (MDDKQHTSSSDDERAE). Positions 1–27 (MDDKQHTSSSDDERAEIATSNQDQETN) are disordered. A compositionally biased stretch (polar residues) spans 18–27 (ATSNQDQETN). Residues 39 to 59 (FISILIGTTLITAVITVVAYI) form a helical membrane-spanning segment. The PDZ domain occupies 124–206 (TKSFNEGVSG…TEVTLTVQRG (83 aa)). Catalysis depends on charge relay system residues Ser329, Asp340, and Lys354.

Belongs to the peptidase S41A family.

The protein resides in the cell membrane. The chain is Probable CtpA-like serine protease from Staphylococcus aureus (strain Mu50 / ATCC 700699).